The primary structure comprises 146 residues: Hemoglobin subunit beta (146 aa).

Residues 2 to 146 form the Globin domain; it reads QWTAEEKQLI…VAHALARKYH (145 aa). Positions 63 and 92 each coordinate heme b.

Belongs to the globin family. As to quaternary structure, heterotetramer of two alpha chains and two beta chains. As to expression, red blood cells.

Involved in oxygen transport from the lung to the various peripheral tissues. This Apus apus (Common swift) protein is Hemoglobin subunit beta (HBB).